The sequence spans 135 residues: MKIKESLAVGSFAFFGGILRYLIGLVLNQPTGFPYGTLCVNLIGAFCLPFLMRYIVARLHLSDQLALAIGTGFFGAFTTFSSFSVDAIRLVNQQQWSAFAWYVGISMVGGVLLSLLADYWAVKLTHNPEEQEVSQ.

The next 4 membrane-spanning stretches (helical) occupy residues 7-27 (LAVGSFAFFGGILRYLIGLVL), 32-52 (GFPYGTLCVNLIGAFCLPFLM), 65-85 (LALAIGTGFFGAFTTFSSFSV), and 96-116 (WSAFAWYVGISMVGGVLLSLL). Na(+) is bound by residues glycine 75 and threonine 78.

The protein belongs to the fluoride channel Fluc/FEX (TC 1.A.43) family.

Its subcellular location is the cell membrane. The enzyme catalyses fluoride(in) = fluoride(out). Na(+) is not transported, but it plays an essential structural role and its presence is essential for fluoride channel function. Its function is as follows. Fluoride-specific ion channel. Important for reducing fluoride concentration in the cell, thus reducing its toxicity. This Latilactobacillus sakei subsp. sakei (strain 23K) (Lactobacillus sakei subsp. sakei) protein is Fluoride-specific ion channel FluC 1.